Consider the following 158-residue polypeptide: Regulator of sigma D (158 aa).

The protein belongs to the Rsd/AlgQ family. As to quaternary structure, interacts with RpoD.

Its subcellular location is the cytoplasm. Binds RpoD and negatively regulates RpoD-mediated transcription activation by preventing the interaction between the primary sigma factor RpoD with the catalytic core of the RNA polymerase and with promoter DNA. May be involved in replacement of the RNA polymerase sigma subunit from RpoD to RpoS during the transition from exponential growth to the stationary phase. This chain is Regulator of sigma D, found in Shigella boydii serotype 4 (strain Sb227).